The chain runs to 489 residues: uncharacterized protein (489 aa).

The next 13 membrane-spanning stretches (helical) occupy residues 1 to 21 (MNAA…LGIR), 40 to 60 (FGTV…FTFL), 74 to 94 (FYII…LPAV), 117 to 137 (PLLG…YLVL), 158 to 178 (AAIW…GIHG), 188 to 208 (IMIL…YYGG), 234 to 254 (AWFS…PHTF), 271 to 291 (IIMP…FAAI), 318 to 338 (FVGI…SMIL), 362 to 382 (VSAL…YFTF), 388 to 408 (IVTL…ALLF), 422 to 442 (FAGI…ETTI), and 456 to 476 (LNVG…VSLM).

This sequence belongs to the sodium:solute symporter (SSF) (TC 2.A.21) family.

It localises to the cell membrane. This is an uncharacterized protein from Bacillus subtilis (strain 168).